The primary structure comprises 612 residues: Rhotekin-2 (612 aa).

The REM-1 domain occupies 3–79 (IKRKKIRESA…LRSQMGESNT (77 aa)). In terms of domain architecture, PH spans 285–392 (DEAMMGFLNQ…WMEAFWQHFY (108 aa)). Disordered stretches follow at residues 483–530 (RNKP…SDKE) and 574–612 (ENKAELDTGTQEPIKPVPTPRQKSLREKLDPRVWLQSQV). A compositionally biased stretch (low complexity) spans 486-498 (PPLLSSDDPSTSS).

The polypeptide is Rhotekin-2 (rtkn2) (Xenopus laevis (African clawed frog)).